The chain runs to 319 residues: MVVILDTISANPVRPRHPEKANRPDALSPPKPDWIRVRAPNTRGYANTRRIVKENGLVTVCEEAGCPNIGECWDKKHATFMIMGDTCTRACAFCNVKTGMPGAIESSEPEYVAEATRKLGLAHVVVTSVDRDDLDDGGAEHFAQTIRAIRERCPATTIEILTPDFLRKDGALEKVVAAKPDVFNHNLETVPSRYLTVRPGARYFHSIRLLQRVKEIDPAIFTKSGIMVGLGEERHEVLQVMDDLRSADVDFLTIGQYLQPTRKHHAVIRYVTPEEFSSYETVAYTKGFLMVSASPLTRSSHHAGEDFAKLQAARATLSR.

Residues 5–31 (LDTISANPVRPRHPEKANRPDALSPPK) are disordered. C61, C66, C72, C87, C91, C94, and S300 together coordinate [4Fe-4S] cluster. The Radical SAM core domain occupies 73–289 (WDKKHATFMI…ETVAYTKGFL (217 aa)).

Belongs to the radical SAM superfamily. Lipoyl synthase family. The cofactor is [4Fe-4S] cluster.

It localises to the cytoplasm. The catalysed reaction is [[Fe-S] cluster scaffold protein carrying a second [4Fe-4S](2+) cluster] + N(6)-octanoyl-L-lysyl-[protein] + 2 oxidized [2Fe-2S]-[ferredoxin] + 2 S-adenosyl-L-methionine + 4 H(+) = [[Fe-S] cluster scaffold protein] + N(6)-[(R)-dihydrolipoyl]-L-lysyl-[protein] + 4 Fe(3+) + 2 hydrogen sulfide + 2 5'-deoxyadenosine + 2 L-methionine + 2 reduced [2Fe-2S]-[ferredoxin]. It functions in the pathway protein modification; protein lipoylation via endogenous pathway; protein N(6)-(lipoyl)lysine from octanoyl-[acyl-carrier-protein]: step 2/2. Functionally, catalyzes the radical-mediated insertion of two sulfur atoms into the C-6 and C-8 positions of the octanoyl moiety bound to the lipoyl domains of lipoate-dependent enzymes, thereby converting the octanoylated domains into lipoylated derivatives. This chain is Lipoyl synthase, found in Nitrobacter winogradskyi (strain ATCC 25391 / DSM 10237 / CIP 104748 / NCIMB 11846 / Nb-255).